Here is a 247-residue protein sequence, read N- to C-terminus: GTP cyclohydrolase 1 type 2 homolog (247 aa).

A divalent metal cation is bound by residues histidine 63, histidine 64, aspartate 101, histidine 215, and glutamate 219.

Belongs to the GTP cyclohydrolase I type 2/NIF3 family. As to quaternary structure, homohexamer.

The sequence is that of GTP cyclohydrolase 1 type 2 homolog from Yersinia pestis.